The chain runs to 86 residues: MKKDIHPDYRPVVFLDTTTGYKFLSGSTKSTKETVEFEGETYPLIRVEISSDSHPFYTGRQKFTQADGRVDRFNKKYGLKDANTAQ.

The protein belongs to the bacterial ribosomal protein bL31 family. Type B subfamily. In terms of assembly, part of the 50S ribosomal subunit.

This Streptococcus agalactiae serotype Ia (strain ATCC 27591 / A909 / CDC SS700) protein is Large ribosomal subunit protein bL31B.